The following is a 1597-amino-acid chain: Pentafunctional AROM polypeptide (1597 aa).

The interval 1 to 384 (MGVPTKISIL…HEPRASTVSN (384 aa)) is 3-dehydroquinate synthase. Residues 44–46 (DTN), 81–84 (ESSK), 114–116 (GGV), and aspartate 119 contribute to the NAD(+) site. Arginine 130 serves as a coordination point for 7-phospho-2-dehydro-3-deoxy-D-arabino-heptonate. 139 to 140 (TT) is a binding site for NAD(+). Residues aspartate 146 and lysine 152 each coordinate 7-phospho-2-dehydro-3-deoxy-D-arabino-heptonate. Residue lysine 161 coordinates NAD(+). 7-phospho-2-dehydro-3-deoxy-D-arabino-heptonate is bound at residue asparagine 162. NAD(+)-binding positions include 179–182 (FLNT) and asparagine 190. A Zn(2+)-binding site is contributed by glutamate 194. Residues 194–197 (EVIK) and lysine 250 each bind 7-phospho-2-dehydro-3-deoxy-D-arabino-heptonate. The Proton acceptor; for 3-dehydroquinate synthase activity role is filled by glutamate 260. 7-phospho-2-dehydro-3-deoxy-D-arabino-heptonate-binding positions include 264 to 268 (RNLLN) and histidine 271. Histidine 271 contributes to the Zn(2+) binding site. Histidine 275 acts as the Proton acceptor; for 3-dehydroquinate synthase activity in catalysis. 7-phospho-2-dehydro-3-deoxy-D-arabino-heptonate is bound by residues histidine 287 and lysine 356. Histidine 287 lines the Zn(2+) pocket. The EPSP synthase stretch occupies residues 397–842 (VSPGVPKNLN…WDSLAQTFKV (446 aa)). Cysteine 824 acts as the For EPSP synthase activity in catalysis. Positions 866–1057 (ASIFIIGMRG…RSKENTFFVS (192 aa)) are shikimate kinase. 872–879 (GMRGAGKT) is an ATP binding site. The tract at residues 1058–1278 (LTLPDLAPAA…AAPGQLSARE (221 aa)) is 3-dehydroquinase. Residue histidine 1181 is the Proton acceptor; for 3-dehydroquinate dehydratase activity of the active site. The active-site Schiff-base intermediate with substrate; for 3-dehydroquinate dehydratase activity is the lysine 1209. The tract at residues 1291–1597 (SKKFAVIGNP…VQPKDDDIST (307 aa)) is shikimate dehydrogenase.

The protein in the N-terminal section; belongs to the sugar phosphate cyclases superfamily. Dehydroquinate synthase family. It in the 2nd section; belongs to the EPSP synthase family. This sequence in the 3rd section; belongs to the shikimate kinase family. In the 4th section; belongs to the type-I 3-dehydroquinase family. The protein in the C-terminal section; belongs to the shikimate dehydrogenase family. In terms of assembly, homodimer. It depends on Zn(2+) as a cofactor.

The protein resides in the cytoplasm. The enzyme catalyses 7-phospho-2-dehydro-3-deoxy-D-arabino-heptonate = 3-dehydroquinate + phosphate. It carries out the reaction 3-dehydroquinate = 3-dehydroshikimate + H2O. The catalysed reaction is shikimate + NADP(+) = 3-dehydroshikimate + NADPH + H(+). It catalyses the reaction shikimate + ATP = 3-phosphoshikimate + ADP + H(+). The enzyme catalyses 3-phosphoshikimate + phosphoenolpyruvate = 5-O-(1-carboxyvinyl)-3-phosphoshikimate + phosphate. It functions in the pathway metabolic intermediate biosynthesis; chorismate biosynthesis; chorismate from D-erythrose 4-phosphate and phosphoenolpyruvate: step 2/7. The protein operates within metabolic intermediate biosynthesis; chorismate biosynthesis; chorismate from D-erythrose 4-phosphate and phosphoenolpyruvate: step 3/7. Its pathway is metabolic intermediate biosynthesis; chorismate biosynthesis; chorismate from D-erythrose 4-phosphate and phosphoenolpyruvate: step 4/7. It participates in metabolic intermediate biosynthesis; chorismate biosynthesis; chorismate from D-erythrose 4-phosphate and phosphoenolpyruvate: step 5/7. It functions in the pathway metabolic intermediate biosynthesis; chorismate biosynthesis; chorismate from D-erythrose 4-phosphate and phosphoenolpyruvate: step 6/7. Its function is as follows. The AROM polypeptide catalyzes 5 consecutive enzymatic reactions in prechorismate polyaromatic amino acid biosynthesis. In Ajellomyces dermatitidis (strain ER-3 / ATCC MYA-2586) (Blastomyces dermatitidis), this protein is Pentafunctional AROM polypeptide.